Reading from the N-terminus, the 425-residue chain is D-arabinitol transporter (425 aa).

Over Met-1–Gln-7 the chain is Cytoplasmic. Residues Trp-8–Gly-28 traverse the membrane as a helical segment. Topologically, residues Asp-29–Ser-51 are extracellular. Residues Phe-52–Ala-72 form a helical membrane-spanning segment. Residues Glu-73–Thr-80 are Cytoplasmic-facing. Residues Met-81–Gly-101 form a helical membrane-spanning segment. Residues His-102–Leu-107 lie on the Extracellular side of the membrane. Residues Ile-108–Val-128 traverse the membrane as a helical segment. The Cytoplasmic portion of the chain corresponds to Ala-129–Ser-141. A helical membrane pass occupies residues Ala-142 to Pro-162. Topologically, residues Ser-163–Met-172 are extracellular. A helical membrane pass occupies residues Gly-173–Leu-193. The Cytoplasmic segment spans residues Arg-194–Asn-237. A helical transmembrane segment spans residues Thr-238–Phe-258. The Extracellular portion of the chain corresponds to Ser-259–Trp-263. A helical transmembrane segment spans residues Leu-264–Leu-284. Topologically, residues Gly-285–Arg-295 are cytoplasmic. The chain crosses the membrane as a helical span at residues Trp-296–Phe-316. Residues Gly-317–Ala-323 are Extracellular-facing. Residues Leu-324–Phe-344 form a helical membrane-spanning segment. Over Pro-345–Asn-360 the chain is Cytoplasmic. Residues Leu-361–Phe-381 form a helical membrane-spanning segment. The Extracellular segment spans residues Ser-382–Thr-383. Residues Ile-384–Ile-404 form a helical membrane-spanning segment. Residues Arg-405 to Ser-425 are Cytoplasmic-facing.

This sequence belongs to the major facilitator superfamily. Sugar transporter (TC 2.A.1.1) family. CsbX subfamily.

Its subcellular location is the cell membrane. This is D-arabinitol transporter (dalT) from Klebsiella pneumoniae.